Reading from the N-terminus, the 217-residue chain is NADPH-dependent 3-demethoxyubiquinone 3-hydroxylase, mitochondrial (217 aa).

A mitochondrion-targeting transit peptide spans 1–34 (MSCARALAACCLWRLRTGALQPLSAYGRRISVRF). A run of 2 repeats spans residues 48–129 (AVDR…TALL) and 130–217 (GKEG…SERL). Residues 48–217 (AVDRIIRVDH…KVAIYLSERL (170 aa)) form a 2 X approximate tandem repeats region. Arginine 51 contacts NADH. Fe cation contacts are provided by glutamate 60, glutamate 90, histidine 93, glutamate 142, glutamate 178, and histidine 181. Lysine 208, tyrosine 212, and arginine 216 together coordinate NADH.

Belongs to the COQ7 family. In terms of assembly, component of a multi-subunit COQ enzyme complex. Interacts with COQ8B and COQ6. Interacts with COQ9. Requires Fe cation as cofactor.

Its subcellular location is the mitochondrion inner membrane. The enzyme catalyses a 5-methoxy-2-methyl-3-(all-trans-polyprenyl)benzoquinone + NADH + O2 = a 3-demethylubiquinone + NAD(+) + H2O. The protein operates within cofactor biosynthesis; ubiquinone biosynthesis. Functionally, catalyzes the hydroxylation of the 5-methoxy-2-methyl-3-(all-trans-polyprenyl)benzoquinone at the C6 position and participates in the biosynthesis of ubiquinone. Catalyzes the reaction through a substrate-mediated reduction pathway, whereby NADH shuttles electrons to 5-methoxy-2-methyl-3-(all-trans-decaprenyl)benzoquinone, which then transfers the electrons to the two Fe(3+) centers. The binding of 5-methoxy-2-methyl-3-(all-trans-polyprenyl)benzoquinone (DMQn) mediates reduction of the diiron center by nicotinamide adenine dinucleotide (NADH) and initiates oxygen activation for subsequent DMQ hydroxylation. The physiological substrates are 5-methoxy-2-methyl-3-(all-trans-nonaprenyl)benzoquinone (DMQ(9)) and 5-methoxy-2-methyl-3-(all-trans-decaprenyl)benzoquinone (DMQ(10)), however in vitro the enzyme does not have any specificity concerning the length of the polyprenyl tail, and accepts tails of various lengths with similar efficiency. Also has a structural role in the COQ enzyme complex, stabilizing other COQ polypeptides. Involved in lifespan determination in a ubiquinone-independent manner. Plays a role in modulating mitochondrial stress responses, acting in the nucleus, perhaps via regulating gene expression, independent of its characterized mitochondrial function in ubiquinone biosynthesis. The protein is NADPH-dependent 3-demethoxyubiquinone 3-hydroxylase, mitochondrial of Bos taurus (Bovine).